A 963-amino-acid polypeptide reads, in one-letter code: Adhesion G protein-coupled receptor D2 (963 aa).

Residues 1–662 (MDAPWGAGER…EEESLLRTLS (662 aa)) are Extracellular-facing. A disordered region spans residues 18 to 38 (DRSGVSLGPPPTPQVNQGTLG). The Pentraxin (PTX) domain occupies 116 to 325 (TTAVLVFDER…LPTVWVRLLC (210 aa)). The cysteines at positions 146 and 212 are disulfide-linked. N-linked (GlcNAc...) asparagine glycosylation occurs at N271. The GAIN-B domain maps to 489-649 (MALVASVQRL…AILLQIYEVQ (161 aa)). A GPS region spans residues 599-649 (PLFPPHPPSPYTGGAWATTGCSVAALYLDSTACFCNHSTSFAILLQIYEVQ). The cysteines at positions 619 and 633 are disulfide-linked. A glycan (N-linked (GlcNAc...) asparagine) is linked at N634. Residues 663–683 (FVGCGVSFCALTTTFLLFLVA) traverse the membrane as a helical segment. Over 684–691 (GVPKSERT) the chain is Cytoplasmic. A helical transmembrane segment spans residues 692 to 712 (TVHKNLTFSLASAEGFLMTSE). The Extracellular segment spans residues 713–720 (WAKANEVA). Residues 721-741 (CVAVTVAMHFLFLVAFSWMLV) traverse the membrane as a helical segment. Residues 742 to 762 (EGLLLWRKVVAVSMHPGPGMR) lie on the Cytoplasmic side of the membrane. A helical transmembrane segment spans residues 763–783 (LYHATGWGVPVGIVAVTLAML). Residues 784–800 (PHDYVAPGHCWLNVHTN) are Extracellular-facing. A helical transmembrane segment spans residues 801-821 (AIWAFVGPVLFVLTANTCILA). Residues 822-857 (RVVMITVSSARRRARMLSPQPCLQQQIWTQIWATVK) are Cytoplasmic-facing. The helical transmembrane segment at 858–878 (PVLVLLPVLGLTWLAGILVHL) threads the bilayer. At 879–880 (SP) the chain is on the extracellular side. Residues 881-901 (AWAYAAVGLNSIQGLYIFLVY) traverse the membrane as a helical segment. Residues 902–963 (AACNEEVRSA…TPRHPLKAPA (62 aa)) are Cytoplasmic-facing.

This sequence belongs to the G-protein coupled receptor 2 family. Adhesion G-protein coupled receptor (ADGR) subfamily.

It localises to the membrane. Its function is as follows. Orphan receptor. The sequence is that of Adhesion G protein-coupled receptor D2 (ADGRD2) from Homo sapiens (Human).